A 114-amino-acid polypeptide reads, in one-letter code: uncharacterized protein (114 aa).

The region spanning 6-114 (IFKNIIQRKI…LGGKKLKSFS (109 aa)) is the HIT domain.

This is an uncharacterized protein from Buchnera aphidicola subsp. Acyrthosiphon pisum (strain APS) (Acyrthosiphon pisum symbiotic bacterium).